A 726-amino-acid chain; its full sequence is Catalase-peroxidase (726 aa).

A disordered region spans residues 1-33 (MSTSDDIHNTTATGKCPFHQGGHDQSAGAGTTT). The tryptophyl-tyrosyl-methioninium (Trp-Tyr) (with M-252) cross-link spans 105–226 (WHGAGTYRSI…LGATEMGLIY (122 aa)). H106 serves as the catalytic Proton acceptor. The segment at residues 226 to 252 (YVNPEGPDHSGEPLSAAAAIRATFGNM) is a cross-link (tryptophyl-tyrosyl-methioninium (Tyr-Met) (with W-105)). H267 contributes to the heme b binding site.

This sequence belongs to the peroxidase family. Peroxidase/catalase subfamily. As to quaternary structure, homodimer or homotetramer. Requires heme b as cofactor. Formation of the three residue Trp-Tyr-Met cross-link is important for the catalase, but not the peroxidase activity of the enzyme.

The catalysed reaction is H2O2 + AH2 = A + 2 H2O. The enzyme catalyses 2 H2O2 = O2 + 2 H2O. In terms of biological role, bifunctional enzyme with both catalase and broad-spectrum peroxidase activity. This Shigella boydii serotype 4 (strain Sb227) protein is Catalase-peroxidase.